The primary structure comprises 241 residues: Probable transcriptional regulatory protein LMOf2365_1554 (241 aa).

A compositionally biased stretch (polar residues) spans M1–K14. Residues M1–S22 form a disordered region.

It belongs to the TACO1 family.

Its subcellular location is the cytoplasm. The sequence is that of Probable transcriptional regulatory protein LMOf2365_1554 from Listeria monocytogenes serotype 4b (strain F2365).